The chain runs to 209 residues: Protein lin-28 homolog A (209 aa).

The disordered stretch occupies residues 1-31 (MGSVSNQQFAGGCAKAAEKAPEEAPPDAARA). Gly-2 is subject to N-acetylglycine. Position 3 is a phosphoserine (Ser-3). In terms of domain architecture, CSD spans 39–112 (HGAGICKWFN…GLESIRVTGP (74 aa)). Positions 113–136 (GGVFCIGSERRPKGKNMQKRRSKG) are flexible linker. At Ser-120 the chain carries Phosphoserine. CCHC-type zinc fingers lie at residues 137–154 (DRCY…ECKL) and 159–176 (KKCH…SCPL). Residues 177–209 (KAQQGPSSQGKPAYFREEEEEIHSPALLPEAQN) are disordered. Residue Ser-200 is modified to Phosphoserine.

This sequence belongs to the lin-28 family. As to quaternary structure, monomer. During skeletal muscle differentiation, associated with translation initiation complexes in the polysomal compartment. Directly interacts with EIF3S2. Interacts with NCL in an RNA-dependent manner. Interacts with TUT4 in the presence of pre-let-7 RNA. In terms of tissue distribution, expressed in embryonic stem cells (ES cells), spermatagonia and testis. Expressed in numerous epithelial tissues including the epithelia of the small intestine, the intralobular duct epithelium of the mammary gland and the epithelia of Henle's loop in the kidney and in the collecting duct (at protein level). Also expressed in the myocardium and skeletal muscle (at protein level).

It is found in the cytoplasm. Its subcellular location is the rough endoplasmic reticulum. The protein localises to the P-body. It localises to the stress granule. The protein resides in the nucleus. It is found in the nucleolus. Functionally, RNA-binding protein that inhibits processing of pre-let-7 miRNAs and regulates translation of mRNAs that control developmental timing, pluripotency and metabolism. Seems to recognize a common structural G-quartet (G4) feature in its miRNA and mRNA targets. 'Translational enhancer' that drives specific mRNAs to polysomes and increases the efficiency of protein synthesis. Its association with the translational machinery and target mRNAs results in an increased number of initiation events per molecule of mRNA and, indirectly, in mRNA stabilization. Binds IGF2 mRNA, MYOD1 mRNA, ARBP/36B4 ribosomal protein mRNA and its own mRNA. Essential for skeletal muscle differentiation program through the translational up-regulation of IGF2 expression. Suppressor of microRNA (miRNA) biogenesis, including that of let-7, miR107, miR-143 and miR-200c. Specifically binds the miRNA precursors (pre-miRNAs), recognizing an 5'-GGAG-3' motif found in pre-miRNA terminal loop, and recruits TUT4 and TUT7 uridylyltransferaseS. This results in the terminal uridylation of target pre-miRNAs. Uridylated pre-miRNAs fail to be processed by Dicer and undergo degradation. The repression of let-7 expression is required for normal development and contributes to maintain the pluripotent state by preventing let-7-mediated differentiation of embryonic stem cells. Localized to the periendoplasmic reticulum area, binds to a large number of spliced mRNAs and inhibits the translation of mRNAs destined for the ER, reducing the synthesis of transmembrane proteins, ER or Golgi lumen proteins, and secretory proteins. Binds to and enhances the translation of mRNAs for several metabolic enzymes, such as PFKP, PDHA1 or SDHA, increasing glycolysis and oxidative phosphorylation. Which, with the let-7 repression may enhance tissue repair in adult tissue. This chain is Protein lin-28 homolog A (Lin28a), found in Mus musculus (Mouse).